The primary structure comprises 431 residues: Histidinol dehydrogenase 1 (431 aa).

Positions 127, 188, and 211 each coordinate NAD(+). The substrate site is built by Ser234, Gln256, and His259. 2 residues coordinate Zn(2+): Gln256 and His259. Catalysis depends on proton acceptor residues Glu324 and His325. 4 residues coordinate substrate: His325, Asp358, Glu412, and His417. A Zn(2+)-binding site is contributed by Asp358. Position 417 (His417) interacts with Zn(2+).

This sequence belongs to the histidinol dehydrogenase family. Requires Zn(2+) as cofactor.

The enzyme catalyses L-histidinol + 2 NAD(+) + H2O = L-histidine + 2 NADH + 3 H(+). It functions in the pathway amino-acid biosynthesis; L-histidine biosynthesis; L-histidine from 5-phospho-alpha-D-ribose 1-diphosphate: step 9/9. Functionally, catalyzes the sequential NAD-dependent oxidations of L-histidinol to L-histidinaldehyde and then to L-histidine. This chain is Histidinol dehydrogenase 1 (hisD1), found in Nostoc sp. (strain PCC 7120 / SAG 25.82 / UTEX 2576).